The chain runs to 312 residues: GDSL esterase/lipase At2g38180 (312 aa).

The signal sequence occupies residues 1 to 22 (MVGPVRPQIVLFGSSIVQYSFT). Asn-79 is a glycosylation site (N-linked (GlcNAc...) asparagine). Residues 285-312 (EPPHPVSLCDHELTQNEQLEPPQPTARL) are disordered.

It belongs to the 'GDSL' lipolytic enzyme family.

Its subcellular location is the secreted. The polypeptide is GDSL esterase/lipase At2g38180 (Arabidopsis thaliana (Mouse-ear cress)).